A 386-amino-acid polypeptide reads, in one-letter code: Succinate--CoA ligase [ADP-forming] subunit beta (386 aa).

Lys46, Glu99, Ala102, and Glu107 together coordinate ATP. Asn199 and Asp213 together coordinate Mg(2+). Substrate is bound by residues Asn264 and 321-323; that span reads GIM.

The protein belongs to the succinate/malate CoA ligase beta subunit family. Heterotetramer of two alpha and two beta subunits. Mg(2+) serves as cofactor.

It catalyses the reaction succinate + ATP + CoA = succinyl-CoA + ADP + phosphate. It carries out the reaction GTP + succinate + CoA = succinyl-CoA + GDP + phosphate. It participates in carbohydrate metabolism; tricarboxylic acid cycle; succinate from succinyl-CoA (ligase route): step 1/1. Functionally, succinyl-CoA synthetase functions in the citric acid cycle (TCA), coupling the hydrolysis of succinyl-CoA to the synthesis of either ATP or GTP and thus represents the only step of substrate-level phosphorylation in the TCA. The beta subunit provides nucleotide specificity of the enzyme and binds the substrate succinate, while the binding sites for coenzyme A and phosphate are found in the alpha subunit. The polypeptide is Succinate--CoA ligase [ADP-forming] subunit beta (Orientia tsutsugamushi (strain Boryong) (Rickettsia tsutsugamushi)).